The sequence spans 582 residues: Threonine--tRNA ligase (582 aa).

A catalytic region spans residues 185–478 (DHRKLGKELE…LTEQYGGAFP (294 aa)). Positions 278, 329, and 455 each coordinate Zn(2+).

This sequence belongs to the class-II aminoacyl-tRNA synthetase family. In terms of assembly, homodimer. The cofactor is Zn(2+).

It is found in the cytoplasm. It catalyses the reaction tRNA(Thr) + L-threonine + ATP = L-threonyl-tRNA(Thr) + AMP + diphosphate + H(+). Functionally, catalyzes the attachment of threonine to tRNA(Thr) in a two-step reaction: L-threonine is first activated by ATP to form Thr-AMP and then transferred to the acceptor end of tRNA(Thr). Also edits incorrectly charged L-seryl-tRNA(Thr). The polypeptide is Threonine--tRNA ligase (Dehalococcoides mccartyi (strain CBDB1)).